Consider the following 1025-residue polypeptide: Multidrug resistance protein MdtC (1025 aa).

A run of 12 helical transmembrane segments spans residues 3-23 (FFAL…AITL), 333-353 (EVEQ…FLFL), 360-380 (IIPA…MYLC), 387-407 (LSLM…IVVL), 431-451 (VGFT…PLLL), 469-489 (VAIG…CGWM), 528-548 (LVGV…ISIP), 853-873 (VILI…LYES), 875-895 (VHPL…LLAL), 897-917 (LFNA…IGIV), 953-973 (PIMM…LSGG), and 984-1004 (ITIV…TPVV).

Belongs to the resistance-nodulation-cell division (RND) (TC 2.A.6) family. MdtC subfamily. As to quaternary structure, part of a tripartite efflux system composed of MdtA, MdtB and MdtC. MdtC forms a heteromultimer with MdtB.

It localises to the cell inner membrane. Its function is as follows. The MdtABC tripartite complex confers resistance against novobiocin and deoxycholate. The sequence is that of Multidrug resistance protein MdtC from Escherichia coli O9:H4 (strain HS).